A 992-amino-acid chain; its full sequence is Vacuolar membrane protease (992 aa).

The Cytoplasmic segment spans residues 1-24 (MSPAMANPRVRKFNPIAFTPLPVT). Residues 25–45 (FITTIVYLAVLILVLVTYLVV) form a helical membrane-spanning segment. Residues 46–390 (PPAPTLEMSP…SAFAVFRLHT (345 aa)) lie on the Vacuolar side of the membrane. N-linked (GlcNAc...) asparagine glycosylation is found at Asn-59, Asn-115, and Asn-118. Positions 174 and 186 each coordinate Zn(2+). Catalysis depends on Glu-220, which acts as the Proton acceptor. Glu-221 provides a ligand contact to Zn(2+). N-linked (GlcNAc...) asparagine glycosylation is present at Asn-237. Zn(2+) is bound by residues Glu-246 and His-319. Residues 391–411 (LFALSVTLLVIGPLVLFITSI) traverse the membrane as a helical segment. Topologically, residues 412–446 (ALSKTDRMYLFSMSKSLGGASETVSLRGLRGLFRT) are cytoplasmic. Residues 447 to 467 (PIILTVTTVISIGLAYLLEKI) traverse the membrane as a helical segment. Over 468 to 474 (NPYIVHS) the chain is Vacuolar. Residues 475-495 (SQFAVWSMMLSVWIFVAWFLA) traverse the membrane as a helical segment. At 496–508 (RVADFFRPSALHR) the chain is on the cytoplasmic side. Residues 509–529 (AYSYTWIFIVTWIMLVISTVY) form a helical membrane-spanning segment. The Vacuolar segment spans residues 530 to 533 (ANQK). Residues 534–554 (GIAAGYFTFFYFAAVFLATWV) traverse the membrane as a helical segment. Residues 555 to 671 (SYLELFSLPR…WSWTLPRWTW (117 aa)) are Cytoplasmic-facing. Positions 579 to 620 (RSSSLSSRLLTPSADELPSDIGPNGAENVGDPDETDPTESTS) are disordered. Residues 672 to 692 (ILQLLLLAPIVIILVGQVGLL) form a helical membrane-spanning segment. The Vacuolar portion of the chain corresponds to 693-708 (LTTAMSQIGSDGVSTF). Residues 709–729 (IVYLACALFSTLLFAPLLPFI) form a helical membrane-spanning segment. Over 730-736 (HRFTYHV) the chain is Cytoplasmic. The chain crosses the membrane as a helical span at residues 737–757 (PIFLLLIFIGTLIYNLVAFPF). Residues 758 to 992 (SPANRLKIFF…VEASHDFIIQ (235 aa)) lie on the Vacuolar side of the membrane. Residues Asn-805, Asn-846, and Asn-954 are each glycosylated (N-linked (GlcNAc...) asparagine).

The protein belongs to the peptidase M28 family. It depends on Zn(2+) as a cofactor.

It localises to the vacuole membrane. May be involved in vacuolar sorting and osmoregulation. This chain is Vacuolar membrane protease, found in Paracoccidioides brasiliensis (strain Pb18).